Consider the following 360-residue polypeptide: Probable mannan endo-1,4-beta-mannosidase A (360 aa).

An N-terminal signal peptide occupies residues 1-18 (MKLSQILTFASLLSGALA). Residues N142 and N178 each contribute to the substrate site. E179 acts as the Proton donor in catalysis. Y254 provides a ligand contact to substrate. The Nucleophile role is filled by E287. Residue N307 is glycosylated (N-linked (GlcNAc...) asparagine). W317 contacts substrate.

It belongs to the glycosyl hydrolase 5 (cellulase A) family.

The protein resides in the secreted. It carries out the reaction Random hydrolysis of (1-&gt;4)-beta-D-mannosidic linkages in mannans, galactomannans and glucomannans.. Endo-1,4-mannanase, a crucial enzyme for depolymerization of seed galactomannans and wood galactoglucomannans. The polypeptide is Probable mannan endo-1,4-beta-mannosidase A (manA) (Aspergillus clavatus (strain ATCC 1007 / CBS 513.65 / DSM 816 / NCTC 3887 / NRRL 1 / QM 1276 / 107)).